The primary structure comprises 209 residues: Ribosomal RNA large subunit methyltransferase E (209 aa).

The S-adenosyl-L-methionine site is built by Gly63, Trp65, Asp83, Asp99, and Asp124. Catalysis depends on Lys164, which acts as the Proton acceptor.

The protein belongs to the class I-like SAM-binding methyltransferase superfamily. RNA methyltransferase RlmE family.

Its subcellular location is the cytoplasm. The enzyme catalyses uridine(2552) in 23S rRNA + S-adenosyl-L-methionine = 2'-O-methyluridine(2552) in 23S rRNA + S-adenosyl-L-homocysteine + H(+). Functionally, specifically methylates the uridine in position 2552 of 23S rRNA at the 2'-O position of the ribose in the fully assembled 50S ribosomal subunit. The sequence is that of Ribosomal RNA large subunit methyltransferase E from Sodalis glossinidius (strain morsitans).